Reading from the N-terminus, the 373-residue chain is MIALHFGAGNIGRGFIGALLHHSGYDVVFADVNETMVSLLNEKKEYTVELADGGRQTEIIGPVSAINSAVQEQKLYRLINEAAIITTAVGPNVLRLIAPSIAEGLKRRTSSEPLNIIACENMIGGSSFLKKAVFGHLTEAERELVNRTVGFPDSAVDRIVPIQHHEDPLKVSVEPFFEWVIDRTGFAGGQPVLKGALFTDDLTPFIERKLFTVNTGHAVTAYVGYQRGLKTVKEAIGHPEIRRVVYDALSETGEYLVKAYGFKQSEHEQYMKKIIGRFENEYITDDVTRVARSPLRKLGANDRLVGPAKKIKEPNALAEGIAAALRFDYQDDPEAVELQKLIAEKGTSRVLQDICGIQLHEPLHGIVLKKLNQ.

3 to 14 (ALHFGAGNIGRG) is a binding site for NAD(+).

This sequence belongs to the mannitol dehydrogenase family.

It catalyses the reaction D-mannitol 1-phosphate + NAD(+) = beta-D-fructose 6-phosphate + NADH + H(+). The chain is Mannitol-1-phosphate 5-dehydrogenase from Bacillus velezensis (strain DSM 23117 / BGSC 10A6 / LMG 26770 / FZB42) (Bacillus amyloliquefaciens subsp. plantarum).